The following is a 322-amino-acid chain: Hydrolase C26A3.11 (322 aa).

Residues 44-290 enclose the CN hydrolase domain; it reads FRIGLVQLAN…PSIVYADIDP (247 aa). Glu83 serves as the catalytic Proton acceptor. The active-site Proton donor is Lys154. Cys195 serves as the catalytic Nucleophile.

This sequence belongs to the carbon-nitrogen hydrolase superfamily. NIT1/NIT2 family.

The polypeptide is Hydrolase C26A3.11 (Schizosaccharomyces pombe (strain 972 / ATCC 24843) (Fission yeast)).